The chain runs to 1024 residues: MKQTTRPPAQYIVAPGTRFRLVANEYDKNKYGQCNYASYRTLVRCKQIRSKEELAKHGGRCEEHVEFSKTLENNHKKEVMRCHAENDSKMQRRRFDPWIASNEYISDDDDYLQAAQTVPQRLPDVANDDILDNNSLRYAEYYTDKDILNIKMDLVQKDIDDLIEFKELVTSQAQKEHELLGNDEEEDYPTDMAQRRIFKASTKYSRNDYLTLTTIDPVFHQCCVGPDMDDSLVIVHTMHSILDKIDNFEPIDSEKQCNKPALHLSKFCFDHIILDRSQKMFDVCNACGLTAIGGVDPKCSFHIKSSAIAETTSCPCNRCVQPGEHASPKDEKNSITCYLNSSDDDEPTLGNLSRIESMVSPMQQFSNQSNTLTAPLPRRYQGPPAQVLRPPQMGPPPGINQVPYQPKANRTPPMTSQQLHEQQKLKMQEEEMMSQTCASDFRVRPIDASQFGGGKKKQRLPPRRSPSFGTSPNSYQFHQQSQKKMPSIISTAYNSSPGKMNFQGWKNQSTSSATRPLPQPRFPVHAARSQQPKMIPLEQTQDSIEDDIGPSPMFQGPEPSRRGVPYYKNAYRRTELPSRHAQHSPLTPSTSTSSSQLLAPPKSPQPGTSSQTFRSQASRLPIAPHRAIAAGLNPADVGTRPAYRSQMAGQRPGMTPSAQQGSPQLISPPRQGSMMPVAMNQSPQAVRRQTPVPPYRLMGPQRVTTSYTVVRSGSSSSVAGPSRSSVASGSQHTALDTVQHDPRLANINVRTFLSIGNRDLSTLTQDEIDLLMAGNSPEKGGRKAGAPGAKESSKAAGGAQKGTSAASTSVPEPTKSSESSVDPQSDVSFSNPSPAPEVIEKVAPAAMTITSNKRKIDETLASESTSSEATLIHDTTSSSSAETVSGEPPAKKSSDVSAPVPSPEKEKEKIDRPKTPKSSTKRTTPTPSGRTPRAAAIAANQAISHSKPNVPSASTSSSAASTDQENPLDLLAELSVAAAAEEQQQAIGSTSKNGGSTKKTQRKSPSRSSIGKKRENSEEYEEEL.

6 disordered regions span residues 447-486 (DASQFGGGKKKQRLPPRRSPSFGTSPNSYQFHQQSQKKMP), 501-564 (NFQG…RRGV), 577-617 (PSRH…RSQA), 645-664 (SQMAGQRPGMTPSAQQGSPQ), 710-739 (VRSGSSSSVAGPSRSSVASGSQHTALDTVQ), and 773-1024 (AGNS…EEEL). 3 stretches are compositionally biased toward polar residues: residues 467 to 486 (SFGTSPNSYQFHQQSQKKMP), 501 to 514 (NFQGWKNQSTSSAT), and 528 to 542 (RSQQPKMIPLEQTQD). Positions 584–600 (SPLTPSTSTSSSQLLAP) are enriched in low complexity. Residues 605 to 617 (QPGTSSQTFRSQA) show a composition bias toward polar residues. 2 stretches are compositionally biased toward low complexity: residues 710–730 (VRSGSSSSVAGPSRSSVASGS) and 784–809 (AGAPGAKESSKAAGGAQKGTSAASTS). Residues 810–832 (VPEPTKSSESSVDPQSDVSFSNP) are compositionally biased toward polar residues. Low complexity predominate over residues 859–870 (TLASESTSSEAT). The span at 873 to 883 (HDTTSSSSAET) shows a compositional bias: polar residues. The segment covering 903-914 (PEKEKEKIDRPK) has biased composition (basic and acidic residues). Low complexity-rich tracts occupy residues 916-943 (PKSSTKRTTPTPSGRTPRAAAIAANQAI), 952-962 (SASTSSSAAST), and 970-986 (LLAELSVAAAAEEQQQA). Over residues 987-998 (IGSTSKNGGSTK) the composition is skewed to polar residues.

The protein resides in the nucleus. Its subcellular location is the cytoplasm. It is found in the cell projection. It localises to the axon. Its function is as follows. Nuclear factor that influences the activity of genes involved in vulval development. In Caenorhabditis elegans, this protein is Protein sumv-1.